The sequence spans 276 residues: 3,4-dihydroxyphenylacetate 2,3-dioxygenase (276 aa).

It depends on Fe cation as a cofactor.

The catalysed reaction is 3,4-dihydroxyphenylacetate + O2 = 2-hydroxy-5-carboxymethylmuconate semialdehyde + H(+). It functions in the pathway aromatic compound metabolism; 4-hydroxyphenylacetate degradation; pyruvate and succinate semialdehyde from 4-hydroxyphenylacetate: step 2/7. Transforms homoprotocatechuic acid (HPC) into 5-carboxymethyl-2-hydroxy-muconic semialdehyde (CHMS). This Escherichia coli protein is 3,4-dihydroxyphenylacetate 2,3-dioxygenase (hpcB).